The following is a 651-amino-acid chain: Beta-glucuronidase (651 aa).

A signal peptide spans 1–22 (MARGSAVAWAALGPLLWGCALG). N173, N272, and N420 each carry an N-linked (GlcNAc...) asparagine glycan. E451 functions as the Proton donor in the catalytic mechanism. Residue N631 is glycosylated (N-linked (GlcNAc...) asparagine).

Belongs to the glycosyl hydrolase 2 family. Homotetramer. N-linked glycosylated with 3 to 4 oligosaccharide chains.

The protein localises to the lysosome. It catalyses the reaction a beta-D-glucuronoside + H2O = D-glucuronate + an alcohol. Inhibited by L-aspartic acid. In terms of biological role, plays an important role in the degradation of dermatan and keratan sulfates. The sequence is that of Beta-glucuronidase (GUSB) from Homo sapiens (Human).